We begin with the raw amino-acid sequence, 481 residues long: Probable glycine dehydrogenase (decarboxylating) subunit 2 (481 aa).

At K269 the chain carries N6-(pyridoxal phosphate)lysine.

The protein belongs to the GcvP family. C-terminal subunit subfamily. The glycine cleavage system is composed of four proteins: P, T, L and H. In this organism, the P 'protein' is a heterodimer of two subunits. Pyridoxal 5'-phosphate is required as a cofactor.

It carries out the reaction N(6)-[(R)-lipoyl]-L-lysyl-[glycine-cleavage complex H protein] + glycine + H(+) = N(6)-[(R)-S(8)-aminomethyldihydrolipoyl]-L-lysyl-[glycine-cleavage complex H protein] + CO2. Its function is as follows. The glycine cleavage system catalyzes the degradation of glycine. The P protein binds the alpha-amino group of glycine through its pyridoxal phosphate cofactor; CO(2) is released and the remaining methylamine moiety is then transferred to the lipoamide cofactor of the H protein. This is Probable glycine dehydrogenase (decarboxylating) subunit 2 from Chlorobium chlorochromatii (strain CaD3).